The primary structure comprises 225 residues: MOB-like protein phocein (225 aa).

Positions 92, 97, 110, 113, 119, 127, 169, and 174 each coordinate Zn(2+).

Belongs to the MOB1/phocein family. In terms of assembly, binds STRN4. Interacts with DNM1 and EPS15. Interacts with nucleoside diphosphate kinase. Interacts with CTTNBP2. Interacts with CTTNBP2NL. Part of the core of STRIPAK complexes composed of PP2A catalytic and scaffolding subunits, the striatins (PP2A regulatory subunits), the striatin-associated proteins MOB4, STRIP1 and STRIP2, PDCD10 and members of the STE20 kinases, such as STK24 and STK26. Post-translationally, phosphorylated on serine residues. Highly expressed in adrenal gland, spinal cord, brain and cerebellum. Detected at lower levels in heart and skeletal muscle, and at very low levels in spleen, liver and intestine.

It localises to the cytoplasm. The protein resides in the membrane. It is found in the golgi apparatus. Its subcellular location is the golgi stack membrane. Functionally, part of the striatin-interacting phosphatase and kinase (STRIPAK) complexes. STRIPAK complexes have critical roles in protein (de)phosphorylation and are regulators of multiple signaling pathways including Hippo, MAPK, nuclear receptor and cytoskeleton remodeling. Different types of STRIPAK complexes are involved in a variety of biological processes such as cell growth, differentiation, apoptosis, metabolism and immune regulation. This is MOB-like protein phocein (Mob4) from Rattus norvegicus (Rat).